The chain runs to 499 residues: Probable alkaline/neutral invertase F (499 aa).

Serine 11 carries the phosphoserine modification. Phosphothreonine is present on threonine 20. Residue serine 497 is modified to Phosphoserine.

This sequence belongs to the glycosyl hydrolase 100 family.

The enzyme catalyses Hydrolysis of terminal non-reducing beta-D-fructofuranoside residues in beta-D-fructofuranosides.. Its function is as follows. Invertase that cleaves sucrose into glucose and fructose. This chain is Probable alkaline/neutral invertase F, found in Arabidopsis thaliana (Mouse-ear cress).